The chain runs to 61 residues: uncharacterized protein (61 aa).

The next 2 membrane-spanning stretches (helical) occupy residues 7–24 and 29–48; these read FNVFCIVALGSIYGYKLF and VSTTRLIIASVIVLWNIVGL.

The protein resides in the cell membrane. This is an uncharacterized protein from Bacillus subtilis (strain 168).